A 285-amino-acid polypeptide reads, in one-letter code: Bifunctional protein FolD (285 aa).

Residues 165 to 167 (GRS) and Ser-190 contribute to the NADP(+) site.

Belongs to the tetrahydrofolate dehydrogenase/cyclohydrolase family. As to quaternary structure, homodimer.

The catalysed reaction is (6R)-5,10-methylene-5,6,7,8-tetrahydrofolate + NADP(+) = (6R)-5,10-methenyltetrahydrofolate + NADPH. It catalyses the reaction (6R)-5,10-methenyltetrahydrofolate + H2O = (6R)-10-formyltetrahydrofolate + H(+). Its pathway is one-carbon metabolism; tetrahydrofolate interconversion. Functionally, catalyzes the oxidation of 5,10-methylenetetrahydrofolate to 5,10-methenyltetrahydrofolate and then the hydrolysis of 5,10-methenyltetrahydrofolate to 10-formyltetrahydrofolate. This Burkholderia mallei (strain NCTC 10247) protein is Bifunctional protein FolD.